We begin with the raw amino-acid sequence, 59 residues long: Large ribosomal subunit protein uL30 (59 aa).

It belongs to the universal ribosomal protein uL30 family. In terms of assembly, part of the 50S ribosomal subunit.

This chain is Large ribosomal subunit protein uL30, found in Leptospira borgpetersenii serovar Hardjo-bovis (strain JB197).